Here is a 129-residue protein sequence, read N- to C-terminus: NADH-quinone oxidoreductase subunit A (129 aa).

A run of 3 helical transmembrane segments spans residues 14–34, 67–87, and 95–115; these read LAIH…VAAW, FLIA…FAWA, and WLGL…LVYL.

The protein belongs to the complex I subunit 3 family. As to quaternary structure, NDH-1 is composed of 14 different subunits. Subunits NuoA, H, J, K, L, M, N constitute the membrane sector of the complex.

It localises to the cell inner membrane. It catalyses the reaction a quinone + NADH + 5 H(+)(in) = a quinol + NAD(+) + 4 H(+)(out). Functionally, NDH-1 shuttles electrons from NADH, via FMN and iron-sulfur (Fe-S) centers, to quinones in the respiratory chain. The immediate electron acceptor for the enzyme in this species is believed to be ubiquinone. Couples the redox reaction to proton translocation (for every two electrons transferred, four hydrogen ions are translocated across the cytoplasmic membrane), and thus conserves the redox energy in a proton gradient. In Rhodopseudomonas palustris (strain BisB5), this protein is NADH-quinone oxidoreductase subunit A.